A 248-amino-acid chain; its full sequence is tRNA pseudouridine synthase A (248 aa).

The active-site Nucleophile is Asp52. Tyr113 lines the substrate pocket.

The protein belongs to the tRNA pseudouridine synthase TruA family. In terms of assembly, homodimer.

It catalyses the reaction uridine(38/39/40) in tRNA = pseudouridine(38/39/40) in tRNA. Formation of pseudouridine at positions 38, 39 and 40 in the anticodon stem and loop of transfer RNAs. The sequence is that of tRNA pseudouridine synthase A from Mesorhizobium japonicum (strain LMG 29417 / CECT 9101 / MAFF 303099) (Mesorhizobium loti (strain MAFF 303099)).